A 359-amino-acid polypeptide reads, in one-letter code: Fructose-like permease IIC component 2 (359 aa).

Residues 11–344 (TRQHLMTGVS…KSLARKNGSS (334 aa)) enclose the PTS EIIC type-2 domain. 9 helical membrane passes run 19–39 (VSHM…SVML), 60–80 (IGVA…GYSI), 99–119 (FGAG…VVHY), 135–155 (IFII…WGLG), 176–196 (SIVM…GGPV), 216–236 (VAIA…ATLI), 251–271 (AALV…AAAD), 290–310 (AALV…LPVV), and 314–334 (LGYI…VNVL).

It localises to the cell inner membrane. The phosphoenolpyruvate-dependent sugar phosphotransferase system (PTS), a major carbohydrate active -transport system, catalyzes the phosphorylation of incoming sugar substrates concomitant with their translocation across the cell membrane. This chain is Fructose-like permease IIC component 2 (frwC), found in Escherichia coli (strain K12).